Consider the following 833-residue polypeptide: Patatin-like phospholipase domain-containing protein SNOG_00918 (833 aa).

Disordered regions lie at residues 1–20 (MTDV…SAFD) and 49–71 (HLSP…SANN). A helical transmembrane segment spans residues 108–128 (WPLLVVVLGWLLFLSIAYVFT). Residues 301–457 (LCLSGGATFA…RTDIPLKALN (157 aa)) form the PNPLA domain. The short motif at 332–336 (GTSGG) is the GXSXG element. The active-site Nucleophile is serine 334. The Proton acceptor role is filled by aspartate 444. Disordered regions lie at residues 630–657 (TKSK…FSRP) and 680–833 (LRTD…GKGL). Low complexity predominate over residues 644-655 (SGSESSSSADFS). Over residues 689–707 (DTPNSPSLSARLTGWWNTK) the composition is skewed to polar residues. Composition is skewed to basic and acidic residues over residues 740-750 (RPPKEVRDLQA), 759-769 (RNSDFLEEIRR), and 782-794 (DEGR…RGDV). The span at 809 to 819 (EFGDNEGDGEE) shows a compositional bias: acidic residues.

It belongs to the PLPL family.

The protein localises to the membrane. Functionally, probable lipid hydrolase. The chain is Patatin-like phospholipase domain-containing protein SNOG_00918 from Phaeosphaeria nodorum (strain SN15 / ATCC MYA-4574 / FGSC 10173) (Glume blotch fungus).